The sequence spans 149 residues: Large ribosomal subunit protein uL13 (149 aa).

This sequence belongs to the universal ribosomal protein uL13 family. In terms of assembly, part of the 50S ribosomal subunit.

Its function is as follows. This protein is one of the early assembly proteins of the 50S ribosomal subunit, although it is not seen to bind rRNA by itself. It is important during the early stages of 50S assembly. The chain is Large ribosomal subunit protein uL13 from Chlamydia pneumoniae (Chlamydophila pneumoniae).